The sequence spans 224 residues: V-type ATP synthase subunit D (224 aa).

Residues 205 to 214 (AKAKQQRKDI) show a composition bias toward basic and acidic residues. The disordered stretch occupies residues 205–224 (AKAKQQRKDIQSGNHGSAAD). Polar residues predominate over residues 215 to 224 (QSGNHGSAAD).

Belongs to the V-ATPase D subunit family.

Its function is as follows. Produces ATP from ADP in the presence of a proton gradient across the membrane. This is V-type ATP synthase subunit D from Deinococcus deserti (strain DSM 17065 / CIP 109153 / LMG 22923 / VCD115).